Consider the following 272-residue polypeptide: uncharacterized protein (272 aa).

The protein resides in the periplasm. Its function is as follows. May be involved in ulvan degradation. Ulvan is the main polysaccharide component of the Ulvales (green seaweed) cell wall. It is composed of disaccharide building blocks comprising 3-sulfated rhamnose (Rha3S) linked to D-glucuronic acid (GlcA), L-iduronic acid (IduA), or D-xylose (Xyl). This is an uncharacterized protein from Formosa agariphila (strain DSM 15362 / KCTC 12365 / LMG 23005 / KMM 3901 / M-2Alg 35-1).